We begin with the raw amino-acid sequence, 436 residues long: Glucose-1-phosphate adenylyltransferase (436 aa).

Alpha-D-glucose 1-phosphate-binding positions include Tyr112, Gly178, 193–194, and Ser211; that span reads EK.

Belongs to the bacterial/plant glucose-1-phosphate adenylyltransferase family. As to quaternary structure, homotetramer.

The catalysed reaction is alpha-D-glucose 1-phosphate + ATP + H(+) = ADP-alpha-D-glucose + diphosphate. It functions in the pathway glycan biosynthesis; glycogen biosynthesis. Functionally, involved in the biosynthesis of ADP-glucose, a building block required for the elongation reactions to produce glycogen. Catalyzes the reaction between ATP and alpha-D-glucose 1-phosphate (G1P) to produce pyrophosphate and ADP-Glc. The sequence is that of Glucose-1-phosphate adenylyltransferase from Histophilus somni (strain 129Pt) (Haemophilus somnus).